An 84-amino-acid chain; its full sequence is uncharacterized protein (84 aa).

The helical transmembrane segment at alanine 10–histidine 32 threads the bilayer.

Its subcellular location is the membrane. This is an uncharacterized protein from Saccharomyces cerevisiae (strain ATCC 204508 / S288c) (Baker's yeast).